Here is a 278-residue protein sequence, read N- to C-terminus: Fasciclin-like arabinogalactan protein 5 (278 aa).

The signal sequence occupies residues Met1–Ala24. The FAS1 domain maps to Asn25 to Ile169. Asn26, Asn74, Asn126, and Asn159 each carry an N-linked (GlcNAc...) asparagine glycan. Residues Val199–Ser257 form a disordered region. Positions Ala224–Ala239 are enriched in low complexity. A compositionally biased stretch (basic and acidic residues) spans Asp240–Lys251. Ser255 is lipidated: GPI-anchor amidated serine. The propeptide at Ala256–Phe278 is removed in mature form.

Belongs to the fasciclin-like AGP family.

Its subcellular location is the cell membrane. May be a cell surface adhesion protein. The polypeptide is Fasciclin-like arabinogalactan protein 5 (FLA5) (Arabidopsis thaliana (Mouse-ear cress)).